The chain runs to 183 residues: Adenine phosphoribosyltransferase (183 aa).

The protein belongs to the purine/pyrimidine phosphoribosyltransferase family. In terms of assembly, homodimer.

It is found in the cytoplasm. It catalyses the reaction AMP + diphosphate = 5-phospho-alpha-D-ribose 1-diphosphate + adenine. The protein operates within purine metabolism; AMP biosynthesis via salvage pathway; AMP from adenine: step 1/1. In terms of biological role, catalyzes a salvage reaction resulting in the formation of AMP, that is energically less costly than de novo synthesis. The polypeptide is Adenine phosphoribosyltransferase (Edwardsiella ictaluri (strain 93-146)).